Reading from the N-terminus, the 510-residue chain is MSHLILNPGTLTLSQIREISRGKVSLELADSAINDINTSAGLVQQVLDEGRTVYGINTGFGLLANTKIAADDLQLLQRSIVLSHAAGTGQYMQDATVRLMMVLKINSLSRGFSGIRLEVINFLIALVNAEVYPCVPEKGSVGASGDLAPLAHMCLPLLGEGEMSYKGQILSAKEGLEIAGLKPIELAAKEGLALLNGTQASTALALEGLFNAEDLFAASSVIGAMSVEAAMGSRSPFDSRIHAARGQKGQIDSAALFRLLLGDESEISLSHVDCERVQDPYSLRCQPQVLGACLTQIRHAAEVLGTEANGVTDNPLVFQDTGDIISGGNFHAEPVAMAADNLAIALAELGSIAERRIALLIDPNLSMLPPFLVENGGVNSGFMIAQVTAAALASENKTYAHPASVDSLPTSANQEDHVSMATFAARRLRDMTENTRGVLAIELLASAQGLDFRAPLQPSVVVAKAKAEIRELVTYYDKDRFFGPDIEAATDLLITASFNAYLPDGILPSL.

Positions Ala143–Gly145 form a cross-link, 5-imidazolinone (Ala-Gly). Ser144 is subject to 2,3-didehydroalanine (Ser).

Belongs to the PAL/histidase family. Post-translationally, contains an active site 4-methylidene-imidazol-5-one (MIO), which is formed autocatalytically by cyclization and dehydration of residues Ala-Ser-Gly.

It is found in the cytoplasm. The enzyme catalyses L-histidine = trans-urocanate + NH4(+). Its pathway is amino-acid degradation; L-histidine degradation into L-glutamate; N-formimidoyl-L-glutamate from L-histidine: step 1/3. The polypeptide is Histidine ammonia-lyase (Shewanella sediminis (strain HAW-EB3)).